A 343-amino-acid chain; its full sequence is L-threonine 3-dehydrogenase (343 aa).

Position 38 (Cys38) interacts with Zn(2+). Catalysis depends on charge relay system residues Thr40 and His43. Zn(2+) contacts are provided by His63, Glu64, Cys93, Cys96, Cys99, and Cys107. NAD(+) is bound by residues Ile175, Asp195, Arg200, 262–264, and 286–287; these read LGL and IY.

It belongs to the zinc-containing alcohol dehydrogenase family. As to quaternary structure, homotetramer. It depends on Zn(2+) as a cofactor.

The protein resides in the cytoplasm. The catalysed reaction is L-threonine + NAD(+) = (2S)-2-amino-3-oxobutanoate + NADH + H(+). It functions in the pathway amino-acid degradation; L-threonine degradation via oxydo-reductase pathway; glycine from L-threonine: step 1/2. Its function is as follows. Catalyzes the NAD(+)-dependent oxidation of L-threonine to 2-amino-3-ketobutyrate. This chain is L-threonine 3-dehydrogenase, found in Saccharopolyspora erythraea (strain ATCC 11635 / DSM 40517 / JCM 4748 / NBRC 13426 / NCIMB 8594 / NRRL 2338).